Reading from the N-terminus, the 348-residue chain is Putative [LysW]-L-2-aminoadipate/[LysW]-L-glutamate phosphate reductase (348 aa).

NADP(+) is bound at residue 9 to 12 (SGYV). Residue Cys149 is part of the active site. An NADP(+)-binding site is contributed by Asn315.

It belongs to the NAGSA dehydrogenase family. Type 1 subfamily. LysY sub-subfamily.

The protein localises to the cytoplasm. It catalyses the reaction [amino-group carrier protein]-C-terminal-N-(1-carboxy-5-oxopentan-1-yl)-L-glutamine + phosphate + NADP(+) = [amino-group carrier protein]-C-terminal-N-(1-carboxy-5-phosphooxy-5-oxopentan-1-yl)-L-glutamine + NADPH + H(+). The catalysed reaction is [amino-group carrier protein]-C-terminal-gamma-(L-glutamyl-5-semialdehyde)-L-glutamate + phosphate + NADP(+) = [amino-group carrier protein]-C-terminal-gamma-(5-phospho-L-glutamyl)-L-glutamate + NADPH + H(+). It participates in amino-acid biosynthesis; L-lysine biosynthesis via AAA pathway; L-lysine from L-alpha-aminoadipate (Thermus route): step 3/5. Its pathway is amino-acid biosynthesis; L-arginine biosynthesis. Functionally, involved in both the arginine and lysine biosynthetic pathways. This Nitrosopumilus maritimus (strain SCM1) protein is Putative [LysW]-L-2-aminoadipate/[LysW]-L-glutamate phosphate reductase.